A 451-amino-acid polypeptide reads, in one-letter code: Phosphoglucosamine mutase (451 aa).

The active-site Phosphoserine intermediate is the Ser-102. Residues Ser-102, Asp-243, Asp-245, and Asp-247 each contribute to the Mg(2+) site. Ser-102 carries the phosphoserine modification.

Belongs to the phosphohexose mutase family. The cofactor is Mg(2+). Activated by phosphorylation.

The enzyme catalyses alpha-D-glucosamine 1-phosphate = D-glucosamine 6-phosphate. Its function is as follows. Catalyzes the conversion of glucosamine-6-phosphate to glucosamine-1-phosphate. The protein is Phosphoglucosamine mutase of Brucella anthropi (strain ATCC 49188 / DSM 6882 / CCUG 24695 / JCM 21032 / LMG 3331 / NBRC 15819 / NCTC 12168 / Alc 37) (Ochrobactrum anthropi).